The following is a 74-amino-acid chain: MLVLSRKINEAIQIGADIEVKVIAVEGDQVKLGIDAPKHIDIHRKEIYLTIQEENNRAAALSSDVISALSSQKK.

This sequence belongs to the CsrA/RsmA family. In terms of assembly, homodimer. The beta-strands of each monomer intercalate to form a hydrophobic core while the alpha-helices form wings that extend away from the core. Two molecules of FliW interact with 1 homodimer. mRNA and FliW bind to different sites on CsrA.

It is found in the cytoplasm. A translational regulator that binds mRNA to regulate translation initiation and/or mRNA stability. Usually binds in the 5'-UTR at or near the Shine-Dalgarno sequence preventing ribosome-binding, thus repressing translation. Represses expression of flagellin (hag) in a post-transcriptional fashion. Specifically binds to 2 sites in the 5'-UTR of hag mRNA in a cooperative fashion; the second site overlaps the Shine-Dalgarno sequence and prevents 30S ribosomal subunit binding. Mutation of either binding site abolishes CsrA regulation of hag expression. Repression is greater in the 1A96 than 168 genetic background and higher in minimal than rich medium. Translation repression is antagonized by FliW. Partner switching by flagellin between FliW and CsrA provides a flagellar assembly checkpoint to tightly control the timing of flagellin synthesis. Flagellin binds to assembly factor FliW, freeing CsrA to repress translation of the flagellin mRNA. When the flagellar hook is assembled flagellin is secreted, depleting intracellular flagellin, which frees FliW to interact with CsrA and inhibits CsrA binding to mRNA. This derepresses flagellin translation and provides protein for flagellar assembly. Once the flagellar filament is completed cytoplasmic flagellin levels rise and CsrA translation repression of flagellin reinitiates. Overexpression leads to a dramatic reduction in motility, a significant reduction in flagellin synthesis and reduced flagella assembly. The chain is Translational regulator CsrA from Bacillus subtilis (strain 168).